We begin with the raw amino-acid sequence, 416 residues long: Serine hydroxymethyltransferase (416 aa).

Residues leucine 117 and 121–123 contribute to the (6S)-5,6,7,8-tetrahydrofolate site; that span reads GHL. Residue lysine 226 is modified to N6-(pyridoxal phosphate)lysine. Glutamate 242 is a (6S)-5,6,7,8-tetrahydrofolate binding site.

Belongs to the SHMT family. Homodimer. Pyridoxal 5'-phosphate serves as cofactor.

Its subcellular location is the cytoplasm. It catalyses the reaction (6R)-5,10-methylene-5,6,7,8-tetrahydrofolate + glycine + H2O = (6S)-5,6,7,8-tetrahydrofolate + L-serine. Its pathway is one-carbon metabolism; tetrahydrofolate interconversion. The protein operates within amino-acid biosynthesis; glycine biosynthesis; glycine from L-serine: step 1/1. Catalyzes the reversible interconversion of serine and glycine with tetrahydrofolate (THF) serving as the one-carbon carrier. This reaction serves as the major source of one-carbon groups required for the biosynthesis of purines, thymidylate, methionine, and other important biomolecules. Also exhibits THF-independent aldolase activity toward beta-hydroxyamino acids, producing glycine and aldehydes, via a retro-aldol mechanism. The chain is Serine hydroxymethyltransferase from Endomicrobium trichonymphae.